The sequence spans 159 residues: Eukaryotic translation initiation factor 5A-2 (159 aa).

Positions 1–10 (MSDDEHHFEA) are enriched in basic and acidic residues. The segment at 1 to 25 (MSDDEHHFEASESGASKTYPQSAGN) is disordered. At serine 2 the chain carries Phosphoserine. A compositionally biased stretch (polar residues) spans 13-24 (SGASKTYPQSAG). Residue lysine 51 is modified to Hypusine.

It belongs to the eIF-5A family. In terms of assembly, homodimer. Interacts with AHK4 and AHP1. Cytokinin regulates the formation of the AHP1-AHK4-ELF5A-2 complex. Lys-51 undergoes hypusination, a unique post-translational modification that consists in the addition of a butylamino group from spermidine to lysine side chain, leading to the formation of the unusual amino acid hypusine. eIF-5As are the only known proteins to undergo this modification, which is essential for their function. Ubiquitous. In roots, expressed mostly inside the stele of the mature zone.

The protein localises to the cytoplasm. The protein resides in the nucleus. Functionally, translation factor that promotes translation elongation and termination, particularly upon ribosome stalling at specific amino acid sequence contexts. Binds between the exit (E) and peptidyl (P) site of the ribosome and promotes rescue of stalled ribosome: specifically required for efficient translation of polyproline-containing peptides as well as other motifs that stall the ribosome. Acts as a ribosome quality control (RQC) cofactor by joining the RQC complex to facilitate peptidyl transfer during CAT tailing step. Regulates cytokinin-mediated root protoxylem specification and represses secifically the expression of AHP6. Regulates the induction of programmed cell death caused by infection with virulent pathogen. The chain is Eukaryotic translation initiation factor 5A-2 (ELF5A-2) from Arabidopsis thaliana (Mouse-ear cress).